The sequence spans 131 residues: Holo-[acyl-carrier-protein] synthase (131 aa).

Residues D8 and E59 each coordinate Mg(2+).

The protein belongs to the P-Pant transferase superfamily. AcpS family. It depends on Mg(2+) as a cofactor.

The protein localises to the cytoplasm. The catalysed reaction is apo-[ACP] + CoA = holo-[ACP] + adenosine 3',5'-bisphosphate + H(+). Its function is as follows. Transfers the 4'-phosphopantetheine moiety from coenzyme A to a Ser of acyl-carrier-protein. The chain is Holo-[acyl-carrier-protein] synthase from Paramagnetospirillum magneticum (strain ATCC 700264 / AMB-1) (Magnetospirillum magneticum).